A 294-amino-acid chain; its full sequence is Putative sugar lactone lactonase (294 aa).

Residues glutamate 21, asparagine 150, and aspartate 201 each coordinate a divalent metal cation. Aspartate 201 serves as the catalytic Proton donor/acceptor.

This sequence belongs to the SMP-30/CGR1 family. The cofactor is a divalent metal cation.

Its function is as follows. Involved in the degradation of galactose via the DeLey-Doudoroff pathway. This Rhizobium meliloti (strain 1021) (Ensifer meliloti) protein is Putative sugar lactone lactonase.